The chain runs to 378 residues: Holliday junction branch migration complex subunit RuvB 1 (378 aa).

Polar residues predominate over residues 1–12; sequence MAIISSRDTGQN. Residues 1 to 62 are disordered; sequence MAIISSRDTG…PGEAQEESLR (62 aa). A large ATPase domain (RuvB-L) region spans residues 13–222; sequence AEGPKRRQQK…FGHVQRLRFY (210 aa). ATP is bound by residues L61, R62, G103, K106, T107, T108, 169–171, R212, Y222, and R259; that span reads EDF. T107 serves as a coordination point for Mg(2+). A small ATPAse domain (RuvB-S) region spans residues 223-293; that stretch reads EPHELVQIVL…VAAAALELFQ (71 aa). The interval 296–378 is head domain (RuvB-H); sequence PMGLDWIDRK…EAQSPLPLWS (83 aa). Residues R351 and R356 each contribute to the DNA site.

The protein belongs to the RuvB family. In terms of assembly, homohexamer. Forms an RuvA(8)-RuvB(12)-Holliday junction (HJ) complex. HJ DNA is sandwiched between 2 RuvA tetramers; dsDNA enters through RuvA and exits via RuvB. An RuvB hexamer assembles on each DNA strand where it exits the tetramer. Each RuvB hexamer is contacted by two RuvA subunits (via domain III) on 2 adjacent RuvB subunits; this complex drives branch migration. In the full resolvosome a probable DNA-RuvA(4)-RuvB(12)-RuvC(2) complex forms which resolves the HJ.

It is found in the cytoplasm. The enzyme catalyses ATP + H2O = ADP + phosphate + H(+). In terms of biological role, the RuvA-RuvB-RuvC complex processes Holliday junction (HJ) DNA during genetic recombination and DNA repair, while the RuvA-RuvB complex plays an important role in the rescue of blocked DNA replication forks via replication fork reversal (RFR). RuvA specifically binds to HJ cruciform DNA, conferring on it an open structure. The RuvB hexamer acts as an ATP-dependent pump, pulling dsDNA into and through the RuvAB complex. RuvB forms 2 homohexamers on either side of HJ DNA bound by 1 or 2 RuvA tetramers; 4 subunits per hexamer contact DNA at a time. Coordinated motions by a converter formed by DNA-disengaged RuvB subunits stimulates ATP hydrolysis and nucleotide exchange. Immobilization of the converter enables RuvB to convert the ATP-contained energy into a lever motion, pulling 2 nucleotides of DNA out of the RuvA tetramer per ATP hydrolyzed, thus driving DNA branch migration. The RuvB motors rotate together with the DNA substrate, which together with the progressing nucleotide cycle form the mechanistic basis for DNA recombination by continuous HJ branch migration. Branch migration allows RuvC to scan DNA until it finds its consensus sequence, where it cleaves and resolves cruciform DNA. This is Holliday junction branch migration complex subunit RuvB 1 from Synechococcus sp. (strain JA-3-3Ab) (Cyanobacteria bacterium Yellowstone A-Prime).